A 798-amino-acid polypeptide reads, in one-letter code: Integrin beta-1-A (798 aa).

An N-terminal signal peptide occupies residues 1-21 (MAHYPVFTVGLLTCLVLCINA). Over 22–727 (QQGGTECLKA…VKEPECPSGP (706 aa)) the chain is Extracellular. The 51-residue stretch at 27 to 77 (ECLKANAKSCGECIQAGPNCGWCTKVDFLQEGEPTSARCDDLAALKSKGCP) folds into the PSI domain. 28 disulfides stabilise this stretch: Cys-28/Cys-46, Cys-36/Cys-464, Cys-39/Cys-65, Cys-49/Cys-76, Cys-206/Cys-212, Cys-260/Cys-300, Cys-400/Cys-414, Cys-434/Cys-462, Cys-466/Cys-486, Cys-477/Cys-489, Cys-491/Cys-500, Cys-502/Cys-533, Cys-516/Cys-531, Cys-525/Cys-536, Cys-538/Cys-553, Cys-555/Cys-576, Cys-560/Cys-574, Cys-568/Cys-579, Cys-581/Cys-590, Cys-592/Cys-615, Cys-599/Cys-613, Cys-607/Cys-618, Cys-620/Cys-630, Cys-633/Cys-636, Cys-640/Cys-691, Cys-646/Cys-665, Cys-649/Cys-661, and Cys-699/Cys-723. Residues 76–106 (CPEDDIQNPRGRKQKLKDIPITSKGKGERMD) are disordered. Residues Asn-109 and Asn-131 are each glycosylated (N-linked (GlcNAc...) asparagine). Residues 139–377 (DYPIDLYYLM…QLIIDSYNSL (239 aa)) form the VWFA domain. Ser-151 and Ser-153 together coordinate Mg(2+). Ca(2+) contacts are provided by Ser-153, Asp-156, Asp-157, and Glu-188. N-linked (GlcNAc...) asparagine glycans are attached at residues Asn-211 and Asn-223. Ca(2+)-binding residues include Asn-243, Asp-245, Pro-247, and Glu-248. Glu-248 is a binding site for Mg(2+). Residues Asn-268 and Asn-362 are each glycosylated (N-linked (GlcNAc...) asparagine). The N-linked (GlcNAc...) asparagine glycan is linked to Asn-416. I-EGF domains follow at residues 466-501 (CQDKGTPNSPECHFGNGTFECGACRCNDGRIGKECE), 502-554 (CSTD…KYCE), 555-591 (CDNFNCDRSNGLICGGKGICKCRVCECFPNYSGSACD), and 592-631 (CSEDTSTCMAKNGQICNGRGICDCGRCKCTDPKFQGPTCE). N-linked (GlcNAc...) asparagine glycosylation is present at Asn-481. An N-linked (GlcNAc...) asparagine glycan is attached at Asn-520. N-linked (GlcNAc...) asparagine glycosylation occurs at Asn-584. N-linked (GlcNAc...) asparagine glycosylation is present at Asn-669. A helical transmembrane segment spans residues 728–751 (DIIPIVAGVVAGIVLIGLALLLIW). At 752–798 (KLLMIIHDRREFAKFEKEKMNAKWDTGENPIYKSAVTTVVNPKYEGK) the chain is on the cytoplasmic side. Tyr-783 is modified (phosphotyrosine).

This sequence belongs to the integrin beta chain family. As to quaternary structure, heterodimer of an alpha and a beta subunit.

The protein localises to the cell membrane. It localises to the cell projection. It is found in the invadopodium membrane. The protein resides in the ruffle membrane. Its subcellular location is the melanosome. The protein localises to the cleavage furrow. It localises to the lamellipodium. It is found in the ruffle. Beta integrins associate with alpha subunits to form receptor complexes that recognize the sequence R-G-D in a wide array of ligands. May be involved in osteoblast compaction. May play role in myoblast differentiation and fusion during skeletal myogenesis. The protein is Integrin beta-1-A (itgb1-a) of Xenopus laevis (African clawed frog).